The following is a 331-amino-acid chain: Septin homolog spn2 (331 aa).

One can recognise a Septin-type G domain in the interval 29-301; it reads RGFQFNVMVV…EKFRFKQLSS (273 aa). The interval 39–46 is G1 motif; it reads GPSGSGKS. Residues 39-46, Thr73, Gly99, 179-187, Gly235, and Arg250 each bind GTP; these read GPSGSGKS and KSDSLTLEE. Positions 96 to 99 are G3 motif; that stretch reads DTPG. A G4 motif region spans residues 178–181; that stretch reads AKSD. A disordered region spans residues 311–331; that stretch reads RMGSPAPVYPSEPHLHTATAQ.

It belongs to the TRAFAC class TrmE-Era-EngA-EngB-Septin-like GTPase superfamily. Septin GTPase family. Component of the septin complex composed of two copies of each spn1, spn2, spn3 and spn4. Component of the sporulation-specific septin complex composed of at least spn2, spn5, spn6 and spn7.

The protein localises to the cytoplasm. It localises to the cell cortex. It is found in the forespore membrane. Plays a role in the cell cycle. Involved in a late stage of septum formation leading to the separation of the daughter cells. Involved in the correct orientation of forespore membrane extension during sporulation. Binds phosphatidylinositol 4-phosphate. In Schizosaccharomyces pombe (strain 972 / ATCC 24843) (Fission yeast), this protein is Septin homolog spn2 (spn2).